Reading from the N-terminus, the 339-residue chain is D-erythrose-4-phosphate dehydrogenase (339 aa).

12-13 (RI) is an NAD(+) binding site. Substrate is bound by residues 154-156 (SCT), arginine 200, 213-214 (TK), and arginine 236. Residue cysteine 155 is the Nucleophile of the active site. An NAD(+)-binding site is contributed by asparagine 318.

It belongs to the glyceraldehyde-3-phosphate dehydrogenase family. Epd subfamily. Homotetramer.

Its subcellular location is the cytoplasm. It catalyses the reaction D-erythrose 4-phosphate + NAD(+) + H2O = 4-phospho-D-erythronate + NADH + 2 H(+). It participates in cofactor biosynthesis; pyridoxine 5'-phosphate biosynthesis; pyridoxine 5'-phosphate from D-erythrose 4-phosphate: step 1/5. Its function is as follows. Catalyzes the NAD-dependent conversion of D-erythrose 4-phosphate to 4-phosphoerythronate. The chain is D-erythrose-4-phosphate dehydrogenase from Photorhabdus laumondii subsp. laumondii (strain DSM 15139 / CIP 105565 / TT01) (Photorhabdus luminescens subsp. laumondii).